Reading from the N-terminus, the 296-residue chain is Small ribosomal subunit protein uS2 (296 aa).

Disordered regions lie at residues 1-24 and 270-296; these read MNTK…TQSQ and HELK…EASQ.

It belongs to the universal ribosomal protein uS2 family.

The sequence is that of Small ribosomal subunit protein uS2 from Mycoplasmopsis synoviae (strain 53) (Mycoplasma synoviae).